A 364-amino-acid polypeptide reads, in one-letter code: Alanine racemase (364 aa).

The active-site Proton acceptor; specific for D-alanine is the lysine 34. Lysine 34 is subject to N6-(pyridoxal phosphate)lysine. Arginine 129 contributes to the substrate binding site. The Proton acceptor; specific for L-alanine role is filled by tyrosine 259. Methionine 307 contributes to the substrate binding site.

The protein belongs to the alanine racemase family. Requires pyridoxal 5'-phosphate as cofactor.

It catalyses the reaction L-alanine = D-alanine. The protein operates within amino-acid biosynthesis; D-alanine biosynthesis; D-alanine from L-alanine: step 1/1. Functionally, catalyzes the interconversion of L-alanine and D-alanine. May also act on other amino acids. The protein is Alanine racemase (alr) of Coxiella burnetii (strain CbuG_Q212) (Coxiella burnetii (strain Q212)).